We begin with the raw amino-acid sequence, 207 residues long: Segregation and condensation protein B (207 aa).

It belongs to the ScpB family. As to quaternary structure, homodimer. Homodimerization may be required to stabilize the binding of ScpA to the Smc head domains. Component of a cohesin-like complex composed of ScpA, ScpB and the Smc homodimer, in which ScpA and ScpB bind to the head domain of Smc. The presence of the three proteins is required for the association of the complex with DNA.

The protein resides in the cytoplasm. In terms of biological role, participates in chromosomal partition during cell division. May act via the formation of a condensin-like complex containing Smc and ScpA that pull DNA away from mid-cell into both cell halves. This chain is Segregation and condensation protein B, found in Mycoplasma genitalium (strain ATCC 33530 / DSM 19775 / NCTC 10195 / G37) (Mycoplasmoides genitalium).